A 250-amino-acid polypeptide reads, in one-letter code: Serine/arginine-rich splicing factor RS31A (250 aa).

2 RRM domains span residues 2-74 (RHVY…WAKD) and 95-166 (KTLF…YALR). Residues 170–250 (EREDRYAGSR…SRSPIQRARG (81 aa)) are disordered. The span at 177 to 191 (GSRRRRSPSPVYRRR) shows a compositional bias: basic residues. A phosphoserine mark is found at serine 183, serine 185, serine 201, serine 218, and serine 243. Over residues 192–230 (PSPDYTRRRSPEYDRYKGPAPYERRKSPDYGRRSSDYGR) the composition is skewed to basic and acidic residues.

It belongs to the splicing factor SR family. RS subfamily. In terms of assembly, component of the spliceosome. Interacts with MOS14.

The protein resides in the nucleus speckle. Its subcellular location is the nucleus. It is found in the nucleoplasm. Probably involved in intron recognition and spliceosome assembly. The polypeptide is Serine/arginine-rich splicing factor RS31A (RS31A) (Arabidopsis thaliana (Mouse-ear cress)).